The chain runs to 24 residues: Humanin-like 13 (24 aa).

Belongs to the humanin family.

The protein resides in the secreted. Its subcellular location is the cytoplasm. In terms of biological role, plays a role as a neuroprotective and antiapoptotic factor. This is Humanin-like 13 from Homo sapiens (Human).